A 321-amino-acid polypeptide reads, in one-letter code: Hex-5-enoyl-[acyl-carrier protein] acetylenase (321 aa).

2 helical membrane-spanning segments follow: residues 36–56 and 62–82; these read FLLY…LLWW and VEIG…SVGL. Positions 83 to 88 match the Histidine box-1 motif; that stretch reads HRYFAH. Residues 99 to 119 form a helical membrane-spanning segment; that stretch reads VILAILGCMGAQGPVVSWVAV. Positions 120-124 match the Histidine box-2 motif; the sequence is HRRHH. A helical membrane pass occupies residues 188–208; it reads YVVWIVLGLLIPTILGGIIHG. The short motif at 269–273 is the Histidine box-3 element; it reads QNNHH.

This sequence belongs to the fatty acid desaturase type 2 family. Fe(2+) is required as a cofactor.

It localises to the membrane. The catalysed reaction is 5-hexenoyl-[ACP] + 2 reduced [2Fe-2S]-[ferredoxin] + O2 + 2 H(+) = 5-hexynoyl-[ACP] + 2 oxidized [2Fe-2S]-[ferredoxin] + 2 H2O. It catalyses the reaction hexanoyl-[ACP] + 2 reduced [2Fe-2S]-[ferredoxin] + O2 + 2 H(+) = 5-hexenoyl-[ACP] + 2 oxidized [2Fe-2S]-[ferredoxin] + 2 H2O. Desaturase involved in the biosynthesis of jamaicamides, which show sodium channel blocking activity and fish toxicity. Catalyzes the conversion of 5-hexenoyl loaded onto the acyl carrier protein JamC (5-hexenoyl-JamC) to 5-hexynoyl-JamC. Can also catalyze the conversion of hexanoyl-JamC to 5-hexenoyl-JamC, but it cannot use free 5-hexenoic acid, 5-hexenoyl-CoA, 2-hexenoyl-JamC, 3-hexenoyl-JamC or 4-hexenoyl-JamC. Is specific for C(6) chains, and cannot use 4-pentenoyl-JamC, 6-heptenoyl-JamC or 7-octenoyl-JamC as substrate. This Moorena producens (strain JHB) protein is Hex-5-enoyl-[acyl-carrier protein] acetylenase.